The sequence spans 289 residues: MASGKEIRGKIKSVENTKKITKAMEMVAASKMRKAQERMHAARPYSDKIRNIAANLSQANPEYTHPFLVKSDVSKTVGFIIVTTDKGLCGGMNTNSLRIVTTKLRELEAQGKKVETVAIGNKGLGFLNRIGARVVSHAVQIGDTPHLDKLIGPVKVMLDAYQDGKLDAVYVVYTKFINTMKQEPMMEQLLPLAADALKADADSLAWDYIYEPDAQTVIDELLIRYVEALIFQSVAENLASEQSARMVAMKSASDNAGSVIGELKLVYNKTRQAAITKELSEIVAGAAAV.

It belongs to the ATPase gamma chain family. As to quaternary structure, F-type ATPases have 2 components, CF(1) - the catalytic core - and CF(0) - the membrane proton channel. CF(1) has five subunits: alpha(3), beta(3), gamma(1), delta(1), epsilon(1). CF(0) has three main subunits: a, b and c.

It is found in the cell inner membrane. Its function is as follows. Produces ATP from ADP in the presence of a proton gradient across the membrane. The gamma chain is believed to be important in regulating ATPase activity and the flow of protons through the CF(0) complex. The protein is ATP synthase gamma chain of Herminiimonas arsenicoxydans.